The chain runs to 643 residues: Protein ecdysoneless homolog (643 aa).

2 disordered regions span residues 428–458 and 501–600; these read EFYNSKKERKNKGKEKQEAGSSSDANMNNFD and IESM…FTPV. Residues 446–456 are compositionally biased toward polar residues; sequence AGSSSDANMNN. The segment covering 528–543 has biased composition (acidic residues); sequence MDFDDVEDDSEGEESN. Positions 564–580 are enriched in polar residues; sequence NSTLEKSFENVNQQHSS. Over residues 581-592 the composition is skewed to basic and acidic residues; the sequence is KQNEESSKTRDE.

This sequence belongs to the ECD family.

This Arabidopsis thaliana (Mouse-ear cress) protein is Protein ecdysoneless homolog.